A 260-amino-acid chain; its full sequence is Flagellar basal-body rod protein FlgG (260 aa).

It belongs to the flagella basal body rod proteins family. The basal body constitutes a major portion of the flagellar organelle and consists of four rings (L,P,S, and M) mounted on a central rod. The rod consists of about 26 subunits of FlgG in the distal portion, and FlgB, FlgC and FlgF are thought to build up the proximal portion of the rod with about 6 subunits each.

It localises to the bacterial flagellum basal body. The protein is Flagellar basal-body rod protein FlgG (flgG) of Escherichia coli O157:H7.